The following is a 304-amino-acid chain: N-carbamoyl-D-amino acid hydrolase (304 aa).

One can recognise a CN hydrolase domain in the interval 5-276 (MILAVGQQGP…DEVITAAVDL (272 aa)). Active-site residues include Glu-47, Lys-127, and Cys-172.

Homotetramer.

It catalyses the reaction an N-carbamoyl-D-amino acid + H2O + 2 H(+) = a D-alpha-amino acid + NH4(+) + CO2. In terms of biological role, the enzyme catalyzes the hydrolysis of N-carbamoyl-D-amino acids to the corresponding which are useful intermediates in the preparation of beta-lactam antibiotics. Industrial production of beta-lactam antibiotics is now being developed using this enzyme. The sequence is that of N-carbamoyl-D-amino acid hydrolase from Rhizobium radiobacter (Agrobacterium tumefaciens).